Reading from the N-terminus, the 244-residue chain is Phosphoadenosine 5'-phosphosulfate reductase (244 aa).

Catalysis depends on cysteine 239, which acts as the Nucleophile; cysteine thiosulfonate intermediate.

The protein belongs to the PAPS reductase family. CysH subfamily.

It localises to the cytoplasm. The catalysed reaction is [thioredoxin]-disulfide + sulfite + adenosine 3',5'-bisphosphate + 2 H(+) = [thioredoxin]-dithiol + 3'-phosphoadenylyl sulfate. It participates in sulfur metabolism; hydrogen sulfide biosynthesis; sulfite from sulfate: step 3/3. In terms of biological role, catalyzes the formation of sulfite from phosphoadenosine 5'-phosphosulfate (PAPS) using thioredoxin as an electron donor. This chain is Phosphoadenosine 5'-phosphosulfate reductase, found in Buchnera aphidicola subsp. Acyrthosiphon pisum (strain Tuc7).